The primary structure comprises 712 residues: Dipeptidyl-peptidase 7 (712 aa).

Residues 1-23 (MQMKLKSILLGAALLLGASGVAK) form the signal peptide. Histidine 89 acts as the Charge relay system in catalysis. Positions 136–173 (TDKVEGQLKGITDEMERLRKAQEVCQELAKKENADENQ) form a coiled coil. Catalysis depends on charge relay system residues aspartate 225 and serine 648.

This sequence belongs to the peptidase S46 family.

It localises to the cell outer membrane. Its activity is regulated as follows. Is inhibited in vitro by typical serine protease inhibitors like diisopropyl fluorophosphate, Pefablock, and 3,4-dichloroisocoumarin, but not by typical cysteine class inhibitors such as E-64 or iododoacetic acid. Its function is as follows. Catalyzes the removal of dipeptides from the N-terminus of oligopeptides. Shows a broad specificity for both aliphatic and aromatic residues in the P1 position, with glycine or proline being not acceptable in this position. Most potently cleaves the synthetic substrate Met-Leu-methylcoumaryl-7-amide (Met-Leu-MCA), Leu-Arg-MCA and Lys-Ala-MCA to a lesser extent. Is likely involved in amino acid metabolism and bacterial growth of asaccharolytic P.gingivalis, that utilizes amino acids from extracellular proteinaceous nutrients as energy and carbon sources. The polypeptide is Dipeptidyl-peptidase 7 (Porphyromonas gingivalis (strain ATCC 33277 / DSM 20709 / CIP 103683 / JCM 12257 / NCTC 11834 / 2561)).